The sequence spans 425 residues: F-box/LRR-repeat protein At3g59250 (425 aa).

One can recognise an F-box domain in the interval 6–54 (KDKISNLPEALICHILSFLPIEDSALTSVLSKRWRYLFAFRPNLVFDDS). LRR repeat units follow at residues 86 to 113 (DLQVNVNGVRLPSKVFVSKSLVRLRIES), 138 to 163 (MLGKGEDCFEKLTSGCHVLEELVLNN), 185 to 210 (CTESYDKNPHSVLFDTPNLVYLKYSD), 264 to 293 (CLSANSLAVLTFCCESIPVFNNLIQLTIKT), and 294 to 319 (NQSVGWESLPALLKNCPILETLVFEG).

This Arabidopsis thaliana (Mouse-ear cress) protein is F-box/LRR-repeat protein At3g59250.